We begin with the raw amino-acid sequence, 181 residues long: MNKKSLLVVLVIALAVVPFAATAQTTPGQNQTAPNSSSPTVISQVDSITAITDYELRDGDLWIQFQSSGGNTLSITETAGSEGATQVRVRSVDIPRGTSTVTIDLFNSADGSVLITSRLSLEQNSGTVVSVSGGSAIISGPFTASDAQASGLGAAISVASVTLLLVFRASRGESTEGERIA.

The first 22 residues, 1-22 (MNKKSLLVVLVIALAVVPFAAT), serve as a signal peptide directing secretion.

This is an uncharacterized protein from Halorubrum pleomorphic virus 1 (HRPV-1).